Consider the following 421-residue polypeptide: Testin (421 aa).

The PET domain occupies 92 to 199 (MILTNPVPAK…GDVKLPSEMD (108 aa)). A disordered region spans residues 135 to 165 (QPVAGSEGAQYRKKQLAKQLPEHDQDPSKCH). The segment covering 154–165 (LPEHDQDPSKCH) has biased composition (basic and acidic residues). LIM zinc-binding domains are found at residues 234–297 (YSCY…CDSE), 299–359 (PRCA…NHAV), and 362–421 (QGCH…KMMS).

Belongs to the prickle / espinas / testin family. In terms of assembly, interacts via LIM domain 1 with ZYX. Interacts (via LIM domain 3) with ENAH and VASP. Interacts with ALKBH4, talin, actin, alpha-actinin, GRIP1 and PXN. Interacts (via LIM domain 2) with ACTL7A (via N-terminus). Heterodimer with ACTL7A; the heterodimer interacts with ENAH to form a heterotrimer.

Its subcellular location is the cytoplasm. It is found in the cell junction. The protein localises to the focal adhesion. Functionally, scaffold protein that may play a role in cell adhesion, cell spreading and in the reorganization of the actin cytoskeleton. Plays a role in the regulation of cell proliferation. May act as a tumor suppressor. In Dasypus novemcinctus (Nine-banded armadillo), this protein is Testin (TES).